A 66-amino-acid chain; its full sequence is Clarkitoxin-1 (66 aa).

Intrachain disulfides connect Cys-3-Cys-24, Cys-17-Cys-42, Cys-46-Cys-59, and Cys-60-Cys-65.

In terms of tissue distribution, expressed by the venom gland.

It is found in the secreted. Functionally, not toxic to mice when injected intravenously or intraperitoneally. This is Clarkitoxin-1 from Micrurus clarki (Clark's coral snake).